The primary structure comprises 450 residues: MAQFFKAKPNSSKQLSAKLSLSVNQLDHLGAGIAQHQGKVVFIPGALPDETVTVQLTEQKKNYARAKLIKVDTPSSERVAPECPHYHTCGGCDLQHMSLSGQREHKEAALLDIMAKFAGAEGGTLSPALTGEGWHYRRRARLATLFDKNTKHLSLGFRAASSSNVVPISQCQVLAKPLSDLIVPFAKLLNQLSAKASLGHLELIAADNGHFAVLRITKALNDKDLAKLSAFAEQHQIHICLQDNEGQFQGVGAELVLPVYQLLDDKAESDAVSLSFTPGNFVQVNGQINKAMVAQAMDWLAPAPDERILDLFCGMGNFSLPLAKMGADVIGVEGVAEMVTQARVNAKANNLDKLTFYHGDLSADLSLEPWMGKIDKLLLDPARAGAFESLQWLKKMKPRKVVYVSCNPASLARDSAVLLERGYRLQQLGLIDMFPQTHHIEAMALFELTK.

Positions 12–70 (SKQLSAKLSLSVNQLDHLGAGIAQHQGKVVFIPGALPDETVTVQLTEQKKNYARAKLIK) constitute a TRAM domain. Residues C83, C89, C92, and C171 each contribute to the [4Fe-4S] cluster site. Positions 283, 312, 317, 333, 360, and 380 each coordinate S-adenosyl-L-methionine. C406 functions as the Nucleophile in the catalytic mechanism.

The protein belongs to the class I-like SAM-binding methyltransferase superfamily. RNA M5U methyltransferase family. RlmD subfamily.

The enzyme catalyses uridine(1939) in 23S rRNA + S-adenosyl-L-methionine = 5-methyluridine(1939) in 23S rRNA + S-adenosyl-L-homocysteine + H(+). Catalyzes the formation of 5-methyl-uridine at position 1939 (m5U1939) in 23S rRNA. The sequence is that of 23S rRNA (uracil(1939)-C(5))-methyltransferase RlmD from Shewanella baltica (strain OS223).